The following is a 167-amino-acid chain: UPF0179 protein Pars_2336 (167 aa).

This sequence belongs to the UPF0179 family.

This Pyrobaculum arsenaticum (strain DSM 13514 / JCM 11321 / PZ6) protein is UPF0179 protein Pars_2336.